The primary structure comprises 326 residues: Thiamine thiazole synthase (326 aa).

Residues cysteine 87, 108-109 (EA), glycine 116, and valine 181 each bind substrate. Cysteine 215 is modified (2,3-didehydroalanine (Cys)). Substrate is bound by residues aspartate 217, histidine 232, methionine 284, and 294–296 (RMG).

It belongs to the THI4 family. Homooctamer. Fe cation serves as cofactor. Post-translationally, during the catalytic reaction, a sulfide is transferred from Cys-215 to a reaction intermediate, generating a dehydroalanine residue.

It localises to the cytoplasm. Its subcellular location is the nucleus. It catalyses the reaction [ADP-thiazole synthase]-L-cysteine + glycine + NAD(+) = [ADP-thiazole synthase]-dehydroalanine + ADP-5-ethyl-4-methylthiazole-2-carboxylate + nicotinamide + 3 H2O + 2 H(+). In terms of biological role, involved in biosynthesis of the thiamine precursor thiazole. Catalyzes the conversion of NAD and glycine to adenosine diphosphate 5-(2-hydroxyethyl)-4-methylthiazole-2-carboxylic acid (ADT), an adenylated thiazole intermediate. The reaction includes an iron-dependent sulfide transfer from a conserved cysteine residue of the protein to a thiazole intermediate. The enzyme can only undergo a single turnover, which suggests it is a suicide enzyme. May have additional roles in adaptation to various stress conditions and in DNA damage tolerance. The polypeptide is Thiamine thiazole synthase (Sclerotinia sclerotiorum (strain ATCC 18683 / 1980 / Ss-1) (White mold)).